Here is a 1286-residue protein sequence, read N- to C-terminus: CLIP-associating protein 2 (1286 aa).

The tract at residues 1-40 is golgi localization; it reads MRRLICKRICDYKSFDDEESVDGNRPSSAASAFKVPAPKT. Residues Ser14 and Ser20 each carry the phosphoserine modification. The segment at 17–70 is disordered; it reads DEESVDGNRPSSAASAFKVPAPKTPGNPVNSARKPGSAGGPKAGGTSKEGGAGA. The span at 53–69 shows a compositional bias: gly residues; it reads SAGGPKAGGTSKEGGAG. The interval 66 to 317 is TOG 1; it reads GGAGAVDEDD…KSLQTYLKSS (252 aa). 3 HEAT repeats span residues 179–214, 215–251, and 256–293; these read HGAEAIVPTLFNLVPNSAKVMATSGCAAIRFIIRHT, HVPRLIPLITSNCTSKSVPVRRRSFEFLDLLLQEWQT, and RHAAVLVETIKKGIHDADAEARVEARKTYMGLRNHFPG. Disordered regions lie at residues 320-350 and 355-374; these read VASLPQSDRSSSSSQESLNRPFSSKWSTANP and GRVSVGGSKASPLPGSLQRS. Residues Ser322, Ser333, and Ser336 each carry the phosphoserine modification. Residues 322 to 340 show a composition bias toward low complexity; sequence SLPQSDRSSSSSQESLNRP. The span at 341 to 350 shows a compositional bias: polar residues; sequence FSSKWSTANP. Residues Ser374, Ser376, and Ser413 each carry the phosphoserine modification. The tract at residues 410–473 is disordered; that stretch reads SYASLEDTSD…GSRSGSPGRV (64 aa). The segment covering 417 to 431 has biased composition (basic and acidic residues); sequence TSDKMDGTASEDGRV. The segment at 450-565 is interaction with microtubules, MAPRE1 and MAPRE3; sequence RGRSRTKMVS…GPGYGMSQSS (116 aa). Residues 459–473 show a composition bias toward low complexity; that stretch reads SQSQPGSRSGSPGRV. Phosphoserine is present on residues Ser461, Ser465, Ser469, Ser484, and Ser495. The tract at residues 492 to 566 is disordered; that stretch reads NSASAQKRSK…PGYGMSQSSR (75 aa). The short motif at 500–503 is the SXIP motif 1; mediates interaction with MAPRE1 and targeting to microtubule plus ends element; the sequence is SKIP. At Ser513 the chain carries Phosphoserine. The SXIP motif 2; mediates interaction with MAPRE1 and targeting to microtubule plus ends signature appears at 523 to 526; the sequence is SRIP. Phosphoserine is present on residues Ser531, Ser535, Ser570, Ser572, Ser581, Ser614, and Ser620. Residues 606–616 are compositionally biased toward basic and acidic residues; sequence RYESYGMHSDD. The tract at residues 606–638 is disordered; that stretch reads RYESYGMHSDDDANSDASSACSERSYSSRNGSI. Residues 620–634 show a composition bias toward low complexity; it reads SDASSACSERSYSSR. A TOG 2 region spans residues 642–873; the sequence is MRQTEDVAEV…TKLLHNHLRN (232 aa). HEAT repeat units follow at residues 702–739 and 764–801; these read KVFSMFLETLVDFIQVHKDDLQDWLFVLLTQLLKKMGA and LQFNILMRFTVDQTQTPSLKVKVAILKYIETLAKQMDP. Thr779 bears the Phosphothreonine mark. The tract at residues 864 to 1286 is interaction with RSN and localization to the Golgi and kinetochores; it reads TKLLHNHLRN…DPTTDVSGQS (423 aa). 2 disordered regions span residues 870–920 and 944–990; these read HLRN…FDYD and SFRS…QPAL. 2 stretches are compositionally biased toward polar residues: residues 872 to 884 and 893 to 914; these read RNTGNGTQSSMGS and SPANWSSPLTSPTNTSQNTLSP. Ser884 is modified (phosphoserine). 4 positions are modified to phosphoserine: Ser944, Ser947, Ser1005, and Ser1021. Residues 947 to 964 show a composition bias toward basic and acidic residues; sequence SQEDMSEPLKRDPKKEDG. The required for cortical localization stretch occupies residues 1009–1286; the sequence is RDYNPYNYSD…DPTTDVSGQS (278 aa). HEAT repeat units follow at residues 1046–1083, 1090–1127, and 1208–1245; these read LDHSDLVAELLKELSNHNERIEERKIALYELMKLTQEE, EHFKTILLLLLETLGDKEPTIRALALKVLKEILRHQPA, and LLLPEIMPGLIQGYDNSESSVRKACVFCLVAVHAVIGD.

It belongs to the CLASP family. In terms of assembly, interacts with microtubules. Interacts with MAPRE1; probably required for targeting to the growing microtubule plus ends. Interacts with CLIP2, ERC1, MAPRE3, PHLDB2 and RSN. The interaction with ERC1 may be mediated by PHLDB2. Interacts with GCC2; recruits CLASP2 to Golgi membranes. Interacts with MACF1. Interacts with SOGA1 and MTCL1. Phosphorylated by GSK3B. Phosphorylation by GSK3B may negatively regulate binding to microtubule lattices in lamella.

The protein localises to the cytoplasm. It localises to the cytoskeleton. Its subcellular location is the microtubule organizing center. It is found in the centrosome. The protein resides in the chromosome. The protein localises to the centromere. It localises to the kinetochore. Its subcellular location is the spindle. It is found in the golgi apparatus. The protein resides in the trans-Golgi network. The protein localises to the cell membrane. It localises to the cell projection. Its subcellular location is the ruffle membrane. It is found in the cell cortex. Its function is as follows. Microtubule plus-end tracking protein that promotes the stabilization of dynamic microtubules. Involved in the nucleation of noncentrosomal microtubules originating from the trans-Golgi network (TGN). Required for the polarization of the cytoplasmic microtubule arrays in migrating cells towards the leading edge of the cell. May act at the cell cortex to enhance the frequency of rescue of depolymerizing microtubules by attaching their plus-ends to cortical platforms composed of ERC1 and PHLDB2. This cortical microtubule stabilizing activity is regulated at least in part by phosphatidylinositol 3-kinase signaling. Also performs a similar stabilizing function at the kinetochore which is essential for the bipolar alignment of chromosomes on the mitotic spindle. Acts as a mediator of ERBB2-dependent stabilization of microtubules at the cell cortex. The protein is CLIP-associating protein 2 (Clasp2) of Rattus norvegicus (Rat).